The following is a 283-amino-acid chain: Pantothenate synthetase (283 aa).

26–33 (MGNLHEGH) is an ATP binding site. His-33 acts as the Proton donor in catalysis. Gln-57 contributes to the (R)-pantoate binding site. Gln-57 lines the beta-alanine pocket. 144 to 147 (GKKD) serves as a coordination point for ATP. Residue Gln-150 participates in (R)-pantoate binding. ATP-binding positions include Ile-173 and 181-184 (LSSR).

The protein belongs to the pantothenate synthetase family. In terms of assembly, homodimer.

It localises to the cytoplasm. The catalysed reaction is (R)-pantoate + beta-alanine + ATP = (R)-pantothenate + AMP + diphosphate + H(+). It participates in cofactor biosynthesis; (R)-pantothenate biosynthesis; (R)-pantothenate from (R)-pantoate and beta-alanine: step 1/1. Catalyzes the condensation of pantoate with beta-alanine in an ATP-dependent reaction via a pantoyl-adenylate intermediate. The protein is Pantothenate synthetase of Polynucleobacter necessarius subsp. necessarius (strain STIR1).